We begin with the raw amino-acid sequence, 121 residues long: Large ribosomal subunit protein bL20 (121 aa).

It belongs to the bacterial ribosomal protein bL20 family.

Its function is as follows. Binds directly to 23S ribosomal RNA and is necessary for the in vitro assembly process of the 50S ribosomal subunit. It is not involved in the protein synthesizing functions of that subunit. The polypeptide is Large ribosomal subunit protein bL20 (Roseobacter denitrificans (strain ATCC 33942 / OCh 114) (Erythrobacter sp. (strain OCh 114))).